The primary structure comprises 65 residues: Light-harvesting protein B800/830/1020 beta-2 chain (65 aa).

At 1–17 (TDIRTGLTDEECQEIHE) the chain is on the cytoplasmic side. A bacteriochlorophyll is bound by residues His-16 and Asn-34. The helical transmembrane segment at 18–40 (MNMLGMHAYWSIGLIANALAYAW) threads the bilayer. Over 41–65 (RPFHQGRAGNRLEDHAPDYVRSALT) the chain is Periplasmic.

The protein belongs to the antenna complex beta subunit family. The core complex is formed by different alpha and beta chains, binding bacteriochlorophyll molecules, and arranged most probably in tetrameric structures disposed around the reaction center. The non-pigmented gamma chains may constitute additional components.

The protein localises to the cell inner membrane. In terms of biological role, antenna complexes are light-harvesting systems, which transfer the excitation energy to the reaction centers. In Halorhodospira halochloris (Ectothiorhodospira halochloris), this protein is Light-harvesting protein B800/830/1020 beta-2 chain.